Consider the following 259-residue polypeptide: BTB/POZ domain-containing protein KCTD4 (259 aa).

A BTB domain is found at 33 to 134 (TLMTLNVGGY…EVKSRWEKEQ (102 aa)).

In Mus musculus (Mouse), this protein is BTB/POZ domain-containing protein KCTD4 (Kctd4).